The primary structure comprises 247 residues: V-type proton ATPase subunit D (247 aa).

Belongs to the V-ATPase D subunit family. V-ATPase is a heteromultimeric enzyme made up of two complexes: the ATP-hydrolytic V1 complex and the proton translocation V0 complex. The V1 complex consists of three catalytic AB heterodimers that form a heterohexamer, three peripheral stalks each consisting of EG heterodimers, one central rotor including subunits D and F, and the regulatory subunits C and H. The proton translocation complex V0 consists of the proton transport subunit a, a ring of proteolipid subunits c9c'', rotary subunit d, subunits e and f, and the accessory subunits ATP6AP1/Ac45 and ATP6AP2/PRR. Interacts with SNX10.

Its subcellular location is the membrane. The protein resides in the cytoplasmic vesicle. It is found in the clathrin-coated vesicle membrane. The protein localises to the cytoplasm. It localises to the cytoskeleton. Its subcellular location is the microtubule organizing center. The protein resides in the centrosome. It is found in the cell projection. The protein localises to the cilium. Its function is as follows. Subunit of the V1 complex of vacuolar(H+)-ATPase (V-ATPase), a multisubunit enzyme composed of a peripheral complex (V1) that hydrolyzes ATP and a membrane integral complex (V0) that translocates protons. V-ATPase is responsible for acidifying and maintaining the pH of intracellular compartments and in some cell types, is targeted to the plasma membrane, where it is responsible for acidifying the extracellular environment. May play a role in cilium biogenesis through regulation of the transport and the localization of proteins to the cilium. This chain is V-type proton ATPase subunit D (ATP6V1D), found in Oryctolagus cuniculus (Rabbit).